Reading from the N-terminus, the 533-residue chain is MAVALDPLTDRFSQFSRSSQRCRLQSLTNLDFNFLGFNTKQTNLSASSHSLNNRSVSTPCFSISGSNLDGSATPHIEILGGQRVPTVRSLVAEVTIAIVSGAQPLLLPSGLGGAYLLQTEKGNNIAVAKPVDEEPLAFNNPKGSGGLTLGQPGMKRSIRVGESGIRELAAYLLDHQGFSSVPPTALVRISHVPFHDRGSDHAAYKVASLQRFVGHDFDAGELGPGSFTVVSVHRIGILDVRVLNLDRHAGNMLVKKIHDQDETTCSNGVGAAELVPIDHGLCLPECLDDPYFEWLNWPQASVPFTDIELQYISNLDPFKDAELLRTELDSIQESSLRVLIVCTIFLKEAAAAGLSLAEIGEKMTRDICRGEESSSVLEILCNKAKASAVSGSDDDDDYSSEWNEVEAELECGIFQFDDEVECKELPDMLQVPIFTRVPSIAANLSALMRCPPNQWISTYDTNIEEERRDRSIVRSKSHPICVNYDEKEGVYFGDMSGDEWEMFLHSFQMLLPEALEGSTSKGPKPRFGSSCKF.

A PI3K/PI4K catalytic domain is found at 101 to 397; sequence GAQPLLLPSG…AVSGSDDDDD (297 aa). The tract at residues 107–113 is G-loop; that stretch reads LPSGLGG. ATP-binding positions include 108–114, Lys129, and 210–213; these read PSGLGGA and QRFV. The segment at 243 to 251 is catalytic loop; it reads LNLDRHAGN. The segment at 276 to 302 is activation loop; the sequence is PIDHGLCLPECLDDPYFEWLNWPQASV. Residue Asp278 coordinates ATP.

This sequence belongs to the PI3/PI4-kinase family. Type II PI4K subfamily.

The enzyme catalyses a 1,2-diacyl-sn-glycero-3-phospho-(1D-myo-inositol) + ATP = a 1,2-diacyl-sn-glycero-3-phospho-(1D-myo-inositol 4-phosphate) + ADP + H(+). In terms of biological role, the phosphorylation of phosphatidylinositol (PI) to PI4P is the first committed step in the generation of phosphatidylinositol 4,5-bisphosphate (PIP2), a precursor of the second messenger inositol 1,4,5-trisphosphate (InsP3). The protein is Phosphatidylinositol 4-kinase gamma 8 (PI4KG8) of Arabidopsis thaliana (Mouse-ear cress).